Consider the following 175-residue polypeptide: Urease accessory protein UreE (175 aa).

Residues 134–175 (FQPESGAYGGGHHHGDESATDLHNPGHGPHRSVPKIHEFKPR) are disordered.

Belongs to the UreE family.

The protein resides in the cytoplasm. Involved in urease metallocenter assembly. Binds nickel. Probably functions as a nickel donor during metallocenter assembly. The polypeptide is Urease accessory protein UreE (Dechloromonas aromatica (strain RCB)).